The chain runs to 314 residues: Thymidylate synthase (314 aa).

Residues R21 and 176-177 each bind dUMP; that span reads RR. The active-site Nucleophile is the C196. Residues 216–219, N227, and 257–259 contribute to the dUMP site; these read RSAD and HLY. D219 contacts (6R)-5,10-methylene-5,6,7,8-tetrahydrofolate. S313 contributes to the (6R)-5,10-methylene-5,6,7,8-tetrahydrofolate binding site.

It belongs to the thymidylate synthase family. Bacterial-type ThyA subfamily. In terms of assembly, homodimer.

Its subcellular location is the cytoplasm. It carries out the reaction dUMP + (6R)-5,10-methylene-5,6,7,8-tetrahydrofolate = 7,8-dihydrofolate + dTMP. Its pathway is pyrimidine metabolism; dTTP biosynthesis. Its function is as follows. Catalyzes the reductive methylation of 2'-deoxyuridine-5'-monophosphate (dUMP) to 2'-deoxythymidine-5'-monophosphate (dTMP) while utilizing 5,10-methylenetetrahydrofolate (mTHF) as the methyl donor and reductant in the reaction, yielding dihydrofolate (DHF) as a by-product. This enzymatic reaction provides an intracellular de novo source of dTMP, an essential precursor for DNA biosynthesis. The chain is Thymidylate synthase from Listeria monocytogenes serotype 4b (strain F2365).